The sequence spans 384 residues: Glutamate 5-kinase (384 aa).

ATP is bound at residue Lys24. Substrate contacts are provided by Ser64, Asp149, and Asn161. ATP contacts are provided by residues 181–182 (TD) and 223–229 (TGGMRTK). In terms of domain architecture, PUA spans 288–370 (PGAILIDAGA…RDIQTLLGYT (83 aa)).

This sequence belongs to the glutamate 5-kinase family.

It is found in the cytoplasm. It catalyses the reaction L-glutamate + ATP = L-glutamyl 5-phosphate + ADP. It functions in the pathway amino-acid biosynthesis; L-proline biosynthesis; L-glutamate 5-semialdehyde from L-glutamate: step 1/2. Functionally, catalyzes the transfer of a phosphate group to glutamate to form L-glutamate 5-phosphate. The sequence is that of Glutamate 5-kinase from Xylella fastidiosa (strain M23).